The primary structure comprises 157 residues: Endoribonuclease YbeY (157 aa).

Positions 118, 122, and 128 each coordinate Zn(2+).

The protein belongs to the endoribonuclease YbeY family. Zn(2+) serves as cofactor.

Its subcellular location is the cytoplasm. Its function is as follows. Single strand-specific metallo-endoribonuclease involved in late-stage 70S ribosome quality control and in maturation of the 3' terminus of the 16S rRNA. The sequence is that of Endoribonuclease YbeY from Bordetella bronchiseptica (strain ATCC BAA-588 / NCTC 13252 / RB50) (Alcaligenes bronchisepticus).